A 560-amino-acid polypeptide reads, in one-letter code: DNA ligase B (560 aa).

K124 acts as the N6-AMP-lysine intermediate in catalysis.

The protein belongs to the NAD-dependent DNA ligase family. LigB subfamily.

The enzyme catalyses NAD(+) + (deoxyribonucleotide)n-3'-hydroxyl + 5'-phospho-(deoxyribonucleotide)m = (deoxyribonucleotide)n+m + AMP + beta-nicotinamide D-nucleotide.. In terms of biological role, catalyzes the formation of phosphodiester linkages between 5'-phosphoryl and 3'-hydroxyl groups in double-stranded DNA using NAD as a coenzyme and as the energy source for the reaction. The sequence is that of DNA ligase B from Escherichia coli (strain ATCC 8739 / DSM 1576 / NBRC 3972 / NCIMB 8545 / WDCM 00012 / Crooks).